We begin with the raw amino-acid sequence, 65 residues long: Large ribosomal subunit protein bL35 (65 aa).

Residues 1-22 (MPKIKTVRGAAKRFKKTGKGGF) are disordered. A compositionally biased stretch (basic residues) spans 10–22 (AAKRFKKTGKGGF).

It belongs to the bacterial ribosomal protein bL35 family.

This Escherichia coli O127:H6 (strain E2348/69 / EPEC) protein is Large ribosomal subunit protein bL35.